The chain runs to 273 residues: Shikimate dehydrogenase (NADP(+)) (273 aa).

Shikimate is bound by residues 15–17 (SKS) and Thr62. Catalysis depends on Lys66, which acts as the Proton acceptor. An NADP(+)-binding site is contributed by Glu78. Shikimate-binding residues include Asn87 and Asp103. NADP(+) contacts are provided by residues 127–131 (GAGGA), 150–155 (NRTQEK), and Met213. Tyr215 is a shikimate binding site. An NADP(+)-binding site is contributed by Gly237.

Belongs to the shikimate dehydrogenase family. As to quaternary structure, homodimer.

It carries out the reaction shikimate + NADP(+) = 3-dehydroshikimate + NADPH + H(+). Its pathway is metabolic intermediate biosynthesis; chorismate biosynthesis; chorismate from D-erythrose 4-phosphate and phosphoenolpyruvate: step 4/7. In terms of biological role, involved in the biosynthesis of the chorismate, which leads to the biosynthesis of aromatic amino acids. Catalyzes the reversible NADPH linked reduction of 3-dehydroshikimate (DHSA) to yield shikimate (SA). The chain is Shikimate dehydrogenase (NADP(+)) from Shewanella woodyi (strain ATCC 51908 / MS32).